The primary structure comprises 586 residues: MRTKYCGNIRISHVNKKVKLCGWVHKVRNLGQFIFVDMRDYTGLVQVIFELKNYTIFKKALNLRNEFCIQVFGTVQKREKKNQNIKIRTGEIEILANVLNILNTSKSLPLNFTQENNDDSRLKYRYLDLRSFDILENLKIRNKITYLIRNFMTKKNFLDIETPILTKSTPEGARDYLVPSRNHYGKFYALPQSPQLFKQILMISGIDRYYQIVKCFRDEDLRSDRQPEFTQIDIEVSFMSAKKIRNLVENLIKKLWLEIRNINLKKFPQISFHEAMKKYGSDKPDLRNPIEIIDVSNIFKDKKFISFFNLNPQKNNRIALLCISKGAHLSRKKIDDYTKYVQRFDAKKLFYIKIKECKLGCLGIHSSIKNILDEIILKEIIEKSQSKNGDILFLIADQEHIVNKSLGMLRLKIGIDLNITKKNRWEPLWIVNFPMFDKDIQGNLSSVHHPFTAVKNMDREILKNSPDLAISDSYDLIINGYEIGGGSVRIHDVNMQKQVFDIIGIKKSMQNEKFGFLIEALKYGAPPHAGIALGLDRIVMLLTNSKNIRDVIAFPKTTSATCLMTNSPSTVDNLLLQELAIKHLKK.

Glu171 is a binding site for L-aspartate. Positions 195-198 (QLFK) are aspartate. Arg217 lines the L-aspartate pocket. Residues 217–219 (RDE) and Gln226 each bind ATP. His448 contributes to the L-aspartate binding site. Glu482 serves as a coordination point for ATP. Arg489 contacts L-aspartate. 534 to 537 (GLDR) is a binding site for ATP.

This sequence belongs to the class-II aminoacyl-tRNA synthetase family. Type 1 subfamily. In terms of assembly, homodimer.

The protein localises to the cytoplasm. The catalysed reaction is tRNA(Asp) + L-aspartate + ATP = L-aspartyl-tRNA(Asp) + AMP + diphosphate. In terms of biological role, catalyzes the attachment of L-aspartate to tRNA(Asp) in a two-step reaction: L-aspartate is first activated by ATP to form Asp-AMP and then transferred to the acceptor end of tRNA(Asp). This chain is Aspartate--tRNA ligase, found in Buchnera aphidicola subsp. Acyrthosiphon pisum (strain 5A).